A 259-amino-acid polypeptide reads, in one-letter code: Small ribosomal subunit protein eS4 (259 aa).

An S4 RNA-binding domain is found at 41-100; that stretch reads LPLSLFLRNRLKYALNYTEAKKILTQRVVRVDGKVRTCHKFPTGFMDVVAIERTNEYFRM.

It belongs to the eukaryotic ribosomal protein eS4 family.

The chain is Small ribosomal subunit protein eS4 (rps-4) from Caenorhabditis elegans.